A 761-amino-acid chain; its full sequence is Phosphoribosylformylglycinamidine synthase subunit PurL (761 aa).

The active site involves His-48. The ATP site is built by Tyr-51 and Lys-90. Position 92 (Glu-92) interacts with Mg(2+). Residues Ser-93–His-96 and Arg-115 contribute to the substrate site. The Proton acceptor role is filled by His-94. Asp-116 contacts Mg(2+). Residue Gln-239 coordinates substrate. Asp-267 serves as a coordination point for Mg(2+). Position 311 to 313 (Glu-311 to Gln-313) interacts with substrate. Residues Asp-499 and Gly-536 each coordinate ATP. Asn-537 provides a ligand contact to Mg(2+). Ser-539 contributes to the substrate binding site.

The protein belongs to the FGAMS family. Monomer. Part of the FGAM synthase complex composed of 1 PurL, 1 PurQ and 2 PurS subunits.

The protein resides in the cytoplasm. It carries out the reaction N(2)-formyl-N(1)-(5-phospho-beta-D-ribosyl)glycinamide + L-glutamine + ATP + H2O = 2-formamido-N(1)-(5-O-phospho-beta-D-ribosyl)acetamidine + L-glutamate + ADP + phosphate + H(+). The protein operates within purine metabolism; IMP biosynthesis via de novo pathway; 5-amino-1-(5-phospho-D-ribosyl)imidazole from N(2)-formyl-N(1)-(5-phospho-D-ribosyl)glycinamide: step 1/2. Functionally, part of the phosphoribosylformylglycinamidine synthase complex involved in the purines biosynthetic pathway. Catalyzes the ATP-dependent conversion of formylglycinamide ribonucleotide (FGAR) and glutamine to yield formylglycinamidine ribonucleotide (FGAM) and glutamate. The FGAM synthase complex is composed of three subunits. PurQ produces an ammonia molecule by converting glutamine to glutamate. PurL transfers the ammonia molecule to FGAR to form FGAM in an ATP-dependent manner. PurS interacts with PurQ and PurL and is thought to assist in the transfer of the ammonia molecule from PurQ to PurL. This Thermosynechococcus vestitus (strain NIES-2133 / IAM M-273 / BP-1) protein is Phosphoribosylformylglycinamidine synthase subunit PurL.